The sequence spans 363 residues: Trans-2,3-enoyl-CoA reductase-like (363 aa).

Serine 37 is subject to Phosphoserine. The next 3 membrane-spanning stretches (helical) occupy residues 143-163 (WTTV…LFYL), 217-237 (LIMS…YINH), and 311-331 (ISFT…LMSI).

Belongs to the steroid 5-alpha reductase family. Predominantly expressed in the heart and skeletal muscle.

Its subcellular location is the membrane. It localises to the endoplasmic reticulum. This Homo sapiens (Human) protein is Trans-2,3-enoyl-CoA reductase-like (TECRL).